A 376-amino-acid polypeptide reads, in one-letter code: Putative C-mannosyltransferase DPY19L2P2 (376 aa).

A glycan (N-linked (GlcNAc...) asparagine) is linked at Asn-32. The next 6 helical transmembrane spans lie at 52–72 (ACFYVGVIFILNGLMMGLFFI), 107–127 (LRESFSYPFLVLQMYVLTLIL), 154–174 (AQFILFTQIASLFPMYVVGYI), 182–202 (IIYMNMISVTLSFILMFGNSM), 233–253 (LNCWLIQGSAWWCGTIILKFL), and 299–319 (LLIYTKTLLLPVVMVITCFIF).

The protein belongs to the dpy-19 family. As to expression, fibroblast, lung, lymphoblast, spleen and testis.

Its subcellular location is the membrane. Functionally, probable C-mannosyltransferase that mediates C-mannosylation of tryptophan residues on target proteins. The polypeptide is Putative C-mannosyltransferase DPY19L2P2 (DPY19L2P2) (Homo sapiens (Human)).